We begin with the raw amino-acid sequence, 273 residues long: Phosphate import ATP-binding protein PstB (273 aa).

Positions 19–258 (LSLQNVTISY…FNDTDKIFNA (240 aa)) constitute an ABC transporter domain. 51–58 (GPSGCGKS) provides a ligand contact to ATP.

It belongs to the ABC transporter superfamily. Phosphate importer (TC 3.A.1.7) family. The complex is composed of two ATP-binding proteins (PstB), two transmembrane proteins (PstC and PstA) and a solute-binding protein (PstS).

It localises to the cell inner membrane. The catalysed reaction is phosphate(out) + ATP + H2O = ADP + 2 phosphate(in) + H(+). Functionally, part of the ABC transporter complex PstSACB involved in phosphate import. Responsible for energy coupling to the transport system. The sequence is that of Phosphate import ATP-binding protein PstB from Synechococcus sp. (strain CC9605).